The sequence spans 55 residues: ATP synthase protein 8 (55 aa).

The helical transmembrane segment at 11 to 31 (LIMFSVTLMLLIVLVINHFML) threads the bilayer.

It belongs to the ATPase protein 8 family. In terms of assembly, F-type ATPases have 2 components, CF(1) - the catalytic core - and CF(0) - the membrane proton channel.

The protein localises to the mitochondrion membrane. In terms of biological role, mitochondrial membrane ATP synthase (F(1)F(0) ATP synthase or Complex V) produces ATP from ADP in the presence of a proton gradient across the membrane which is generated by electron transport complexes of the respiratory chain. F-type ATPases consist of two structural domains, F(1) - containing the extramembraneous catalytic core and F(0) - containing the membrane proton channel, linked together by a central stalk and a peripheral stalk. During catalysis, ATP synthesis in the catalytic domain of F(1) is coupled via a rotary mechanism of the central stalk subunits to proton translocation. Part of the complex F(0) domain. Minor subunit located with subunit a in the membrane. The protein is ATP synthase protein 8 (MT-ATP8) of Albinaria caerulea (Land snail).